The primary structure comprises 544 residues: MAAKQVLFSDEARAKMLDGVNTLANAVKVTLGPKGRNVVLDKSFGAPTITKDGVSVAKEIELEDKFENMGAQIVKEVASKTADVAGDGTTTATVLAQALLTEGLKAVTAGMNPMDLKRGIDKATARLVEELKALSKPCSDPKSIEQVGTISANSDATVGKLIADAMAKVGKEGVITVEEGKGFEDELDVVEGMQFDRGYLSPYFATNQENMTTDLENPYILIVDKKISNIRDLLPILEGVSKSGRALLIIAEDVESEALATLVVNNMRGVVKVCAVKAPGFGDRRKAMLEDIATLTGATFVSEDLSMKLEETNMEHLGTASRVQVTKDNTTIIDGAGEKEAIAKRINVIKANIAEANSDYDREKLQERLAKLSGGVAVIKVGAVTEAEMKEKKDRVDDALHATRAAVEEGIVAGGGVALIRAQKALDGLTGENDDQNHGIALLRKAIEAPLRQIVSNAGGESSVVVNQVKANQGNYGYNAANDTYGDMVEMGILDPTKVTRSALQHAASIAGLMITTEAMIGEIKEAAPAMPMGGGMGGMPGMM.

ATP contacts are provided by residues 30-33 (TLGP), Lys-51, 87-91 (DGTTT), Gly-415, 479-481 (NAA), and Asp-495.

The protein belongs to the chaperonin (HSP60) family. In terms of assembly, forms a cylinder of 14 subunits composed of two heptameric rings stacked back-to-back. Interacts with the co-chaperonin GroES.

It localises to the cytoplasm. It catalyses the reaction ATP + H2O + a folded polypeptide = ADP + phosphate + an unfolded polypeptide.. Together with its co-chaperonin GroES, plays an essential role in assisting protein folding. The GroEL-GroES system forms a nano-cage that allows encapsulation of the non-native substrate proteins and provides a physical environment optimized to promote and accelerate protein folding. This chain is Chaperonin GroEL, found in Francisella tularensis subsp. holarctica (strain FTNF002-00 / FTA).